The primary structure comprises 778 residues: 5-methyltetrahydropteroyltriglutamate--homocysteine methyltransferase (778 aa).

Residues 17–20 (RELK) and K118 each bind 5-methyltetrahydropteroyltri-L-glutamate. L-homocysteine is bound by residues 436-438 (IGS) and E489. Residues 436–438 (IGS) and E489 contribute to the L-methionine site. 5-methyltetrahydropteroyltri-L-glutamate-binding positions include 520 to 521 (RC) and W566. D604 lines the L-homocysteine pocket. Residue D604 coordinates L-methionine. Residue E610 coordinates 5-methyltetrahydropteroyltri-L-glutamate. Residues H646, C648, and E670 each coordinate Zn(2+). H699 (proton donor) is an active-site residue. Position 731 (C731) interacts with Zn(2+).

It belongs to the vitamin-B12 independent methionine synthase family. The cofactor is Zn(2+).

The enzyme catalyses 5-methyltetrahydropteroyltri-L-glutamate + L-homocysteine = tetrahydropteroyltri-L-glutamate + L-methionine. The protein operates within amino-acid biosynthesis; L-methionine biosynthesis via de novo pathway; L-methionine from L-homocysteine (MetE route): step 1/1. Catalyzes the transfer of a methyl group from 5-methyltetrahydrofolate to homocysteine resulting in methionine formation. The chain is 5-methyltetrahydropteroyltriglutamate--homocysteine methyltransferase from Vibrio vulnificus (strain CMCP6).